The chain runs to 197 residues: MLDVILVIIGYLIGSISSAIVVCRAMNLGDPRQGGSGNPGATNVLRLAGKVPAGITLLGDWLKGTLPVLLAWLATEDPVVASAAGLAAFFGHLFPVYFRFQGGKGVATGLGVILAWSPLALLATVVTWLAVAGAFRYSSLAAVVAFAMAPIYMLWLSASPVLTAATAILTAAIVWRHRENIVRLAAGEESRIGSSGS.

The next 5 membrane-spanning stretches (helical) occupy residues 2-22 (LDVILVIIGYLIGSISSAIVV), 53-73 (AGITLLGDWLKGTLPVLLAWL), 78-98 (PVVASAAGLAAFFGHLFPVYF), 112-132 (VILAWSPLALLATVVTWLAVA), and 152-174 (YMLWLSASPVLTAATAILTAAIV).

It belongs to the PlsY family. In terms of assembly, probably interacts with PlsX.

It is found in the cell inner membrane. The catalysed reaction is an acyl phosphate + sn-glycerol 3-phosphate = a 1-acyl-sn-glycero-3-phosphate + phosphate. Its pathway is lipid metabolism; phospholipid metabolism. In terms of biological role, catalyzes the transfer of an acyl group from acyl-phosphate (acyl-PO(4)) to glycerol-3-phosphate (G3P) to form lysophosphatidic acid (LPA). This enzyme utilizes acyl-phosphate as fatty acyl donor, but not acyl-CoA or acyl-ACP. This is Glycerol-3-phosphate acyltransferase from Halorhodospira halophila (strain DSM 244 / SL1) (Ectothiorhodospira halophila (strain DSM 244 / SL1)).